A 61-amino-acid chain; its full sequence is 2S seed storage albumin protein (61 aa).

This sequence belongs to the 2S seed storage albumins family. In terms of assembly, the mature protein consists of a small and a large chain linked by 2 disulfide bonds.

This is a 2S seed storage protein. Inhibits cell-free protein synthesis. The sequence is that of 2S seed storage albumin protein from Cucurbita moschata (Winter crookneck squash).